Consider the following 422-residue polypeptide: Phytoene synthase, chloroplastic (422 aa).

The N-terminal 83 residues, 1–83, are a transit peptide targeting the chloroplast; that stretch reads MSLASSLVVS…GSVIVASMVA (83 aa).

This sequence belongs to the phytoene/squalene synthase family. Monomer.

Its subcellular location is the plastid. It is found in the chloroplast. The catalysed reaction is 2 (2E,6E,10E)-geranylgeranyl diphosphate = 15-cis-phytoene + 2 diphosphate. It functions in the pathway carotenoid biosynthesis; phytoene biosynthesis; all-trans-phytoene from geranylgeranyl diphosphate: step 1/1. Functionally, catalyzes the reaction from prephytoene diphosphate to phytoene. The chain is Phytoene synthase, chloroplastic (PSY) from Cucumis melo (Muskmelon).